We begin with the raw amino-acid sequence, 563 residues long: Arginine--tRNA ligase (563 aa).

The 'HIGH' region motif lies at 120-130; it reads PNIAKPFHIGH.

Belongs to the class-I aminoacyl-tRNA synthetase family. As to quaternary structure, monomer.

The protein localises to the cytoplasm. It carries out the reaction tRNA(Arg) + L-arginine + ATP = L-arginyl-tRNA(Arg) + AMP + diphosphate. This is Arginine--tRNA ligase from Clostridium botulinum (strain 657 / Type Ba4).